The primary structure comprises 196 residues: DnaA initiator-associating protein DiaA (196 aa).

The SIS domain occupies 34–196 (LVQSLLNGNK…DNTLFPHQDD (163 aa)).

This sequence belongs to the SIS family. DiaA subfamily. As to quaternary structure, homotetramer; dimer of dimers.

Functionally, required for the timely initiation of chromosomal replication via direct interactions with the DnaA initiator protein. In Yersinia enterocolitica serotype O:8 / biotype 1B (strain NCTC 13174 / 8081), this protein is DnaA initiator-associating protein DiaA.